Reading from the N-terminus, the 479-residue chain is ATP synthase subunit beta (479 aa).

Residue 153–160 (GGAGVGKT) participates in ATP binding.

The protein belongs to the ATPase alpha/beta chains family. In terms of assembly, F-type ATPases have 2 components, CF(1) - the catalytic core - and CF(0) - the membrane proton channel. CF(1) has five subunits: alpha(3), beta(3), gamma(1), delta(1), epsilon(1). CF(0) has three main subunits: a(1), b(2) and c(9-12). The alpha and beta chains form an alternating ring which encloses part of the gamma chain. CF(1) is attached to CF(0) by a central stalk formed by the gamma and epsilon chains, while a peripheral stalk is formed by the delta and b chains.

The protein resides in the cell membrane. It carries out the reaction ATP + H2O + 4 H(+)(in) = ADP + phosphate + 5 H(+)(out). With respect to regulation, increases 2-fold following exposure to low pH. In terms of biological role, produces ATP from ADP in the presence of a proton gradient across the membrane. The catalytic sites are hosted primarily by the beta subunits. The sequence is that of ATP synthase subunit beta from Lactobacillus acidophilus (strain ATCC 700396 / NCK56 / N2 / NCFM).